A 404-amino-acid chain; its full sequence is Probable tRNA sulfurtransferase (404 aa).

One can recognise a THUMP domain in the interval 61–166 (EAISERLKDV…SGYSYIMCGE (106 aa)). ATP-binding positions include 184–185 (LL), 209–210 (HF), arginine 266, glycine 288, and glutamine 297.

This sequence belongs to the ThiI family.

It localises to the cytoplasm. The enzyme catalyses [ThiI sulfur-carrier protein]-S-sulfanyl-L-cysteine + a uridine in tRNA + 2 reduced [2Fe-2S]-[ferredoxin] + ATP + H(+) = [ThiI sulfur-carrier protein]-L-cysteine + a 4-thiouridine in tRNA + 2 oxidized [2Fe-2S]-[ferredoxin] + AMP + diphosphate. It catalyses the reaction [ThiS sulfur-carrier protein]-C-terminal Gly-Gly-AMP + S-sulfanyl-L-cysteinyl-[cysteine desulfurase] + AH2 = [ThiS sulfur-carrier protein]-C-terminal-Gly-aminoethanethioate + L-cysteinyl-[cysteine desulfurase] + A + AMP + 2 H(+). Its pathway is cofactor biosynthesis; thiamine diphosphate biosynthesis. In terms of biological role, catalyzes the ATP-dependent transfer of a sulfur to tRNA to produce 4-thiouridine in position 8 of tRNAs, which functions as a near-UV photosensor. Also catalyzes the transfer of sulfur to the sulfur carrier protein ThiS, forming ThiS-thiocarboxylate. This is a step in the synthesis of thiazole, in the thiamine biosynthesis pathway. The sulfur is donated as persulfide by IscS. This chain is Probable tRNA sulfurtransferase, found in Bacillus cereus (strain G9842).